The chain runs to 173 residues: Peptidyl-prolyl cis-trans isomerase cyp3 (173 aa).

The PPIase cyclophilin-type domain maps to 8 to 172 (FMDIAIDGRL…SNVAIVECGE (165 aa)).

The protein belongs to the cyclophilin-type PPIase family. PPIase H subfamily.

It is found in the cytoplasm. The protein localises to the cytoskeleton. Its subcellular location is the microtubule organizing center. It localises to the spindle pole body. It catalyses the reaction [protein]-peptidylproline (omega=180) = [protein]-peptidylproline (omega=0). In terms of biological role, PPIases accelerate the folding of proteins. It catalyzes the cis-trans isomerization of proline imidic peptide bonds in oligopeptides. The protein is Peptidyl-prolyl cis-trans isomerase cyp3 (cyp3) of Schizosaccharomyces pombe (strain 972 / ATCC 24843) (Fission yeast).